Reading from the N-terminus, the 265-residue chain is Arcelin-2 (265 aa).

A signal peptide spans 1-21 (MASSNLLTLALFLVLLTHANS). N-linked (GlcNAc...) asparagine glycans are attached at residues N33 and N89. C165 and C201 are joined by a disulfide.

It belongs to the leguminous lectin family.

Functionally, seed storage. This carbohydrate-binding lectin has toxic effects on bean bruchid pests. Antibiosis properties of legume lectins are proposed to be due to the lysis of epithelial cells of the intestine by binding to the carbohydrate moieties of these proteins. The polypeptide is Arcelin-2 (ARC2) (Phaseolus vulgaris (Kidney bean)).